The chain runs to 375 residues: Carbamoyl phosphate synthase small chain (375 aa).

The tract at residues Met1–Glu185 is CPSase. L-glutamine contacts are provided by Ser47, Gly237, and Gly239. The region spanning Lys189–Ser375 is the Glutamine amidotransferase type-1 domain. Cys265 functions as the Nucleophile in the catalytic mechanism. L-glutamine contacts are provided by Leu266, Gln269, Asn307, Gly309, and Phe310. Active-site residues include His349 and Glu351.

Belongs to the CarA family. In terms of assembly, composed of two chains; the small (or glutamine) chain promotes the hydrolysis of glutamine to ammonia, which is used by the large (or ammonia) chain to synthesize carbamoyl phosphate. Tetramer of heterodimers (alpha,beta)4.

It catalyses the reaction hydrogencarbonate + L-glutamine + 2 ATP + H2O = carbamoyl phosphate + L-glutamate + 2 ADP + phosphate + 2 H(+). It carries out the reaction L-glutamine + H2O = L-glutamate + NH4(+). It participates in amino-acid biosynthesis; L-arginine biosynthesis; carbamoyl phosphate from bicarbonate: step 1/1. The protein operates within pyrimidine metabolism; UMP biosynthesis via de novo pathway; (S)-dihydroorotate from bicarbonate: step 1/3. Small subunit of the glutamine-dependent carbamoyl phosphate synthetase (CPSase). CPSase catalyzes the formation of carbamoyl phosphate from the ammonia moiety of glutamine, carbonate, and phosphate donated by ATP, constituting the first step of 2 biosynthetic pathways, one leading to arginine and/or urea and the other to pyrimidine nucleotides. The small subunit (glutamine amidotransferase) binds and cleaves glutamine to supply the large subunit with the substrate ammonia. The polypeptide is Carbamoyl phosphate synthase small chain (Xanthomonas campestris pv. campestris (strain ATCC 33913 / DSM 3586 / NCPPB 528 / LMG 568 / P 25)).